A 201-amino-acid polypeptide reads, in one-letter code: Phosphoprotein (201 aa).

A disordered region spans residues 1 to 70 (MATRPSSLVD…DQRTGREQLS (70 aa)). 2 short sequence motifs (nuclear localization signal) span residues 29 to 36 (PRPRKIPR) and 181 to 193 (PPRI…SAPT).

As to quaternary structure, homomultimer; only active in its oligomeric state. Interacts with nucleoprotein/N. Interacts with matrix/M protein. Interacts with host TBK1. Interacts with polymerase L. Interacts with host HMGB1; this interaction is required to stabilize RNP on chromosomes. Phosphorylated by host PKC epsilon and casein kinase II.

The protein resides in the host nucleus. The protein localises to the host cytoplasm. Its function is as follows. Essential component of the RNA polymerase transcription and replication complex. Acts as a scaffold which brings L in close proximity to the N-RNA complex. Plays a role in the segregation of the viral genome in host daughter cells during mitosis by interacting with host HMGB1, a host chromatin-remodeling DNA architectural protein, thereby stabilizing RNP on chromosomes. Interacts with host TBK1 and thus interferes with activation of cellular antiviral state. Inhibits cellular histone acetyltransferase activities. The chain is Phosphoprotein (P/X) from Bos taurus (Bovine).